A 201-amino-acid polypeptide reads, in one-letter code: Small ribosomal subunit protein uS4 (201 aa).

Residues 1–42 (MARYTGPVTRKSRRLGTDLVGGDQSFEKRPYPPGQHGRARIK) form a disordered region. Residues 91-157 (SRLDNVVYRA…VPFQIARETA (67 aa)) form the S4 RNA-binding domain.

The protein belongs to the universal ribosomal protein uS4 family. Part of the 30S ribosomal subunit. Contacts protein S5. The interaction surface between S4 and S5 is involved in control of translational fidelity.

Its function is as follows. One of the primary rRNA binding proteins, it binds directly to 16S rRNA where it nucleates assembly of the body of the 30S subunit. With S5 and S12 plays an important role in translational accuracy. The polypeptide is Small ribosomal subunit protein uS4 (Mycobacterium ulcerans (strain Agy99)).